The sequence spans 396 residues: Digeranylgeranylglycerophospholipid reductase 2 (396 aa).

FAD contacts are provided by alanine 13, glutamate 32, cysteine 43, alanine 44, glycine 46, arginine 92, alanine 116, aspartate 278, glycine 290, and leucine 291.

It belongs to the geranylgeranyl reductase family. DGGGPL reductase subfamily. FAD is required as a cofactor.

It catalyses the reaction a 2,3-bis-O-phytanyl-sn-glycerol 1-phospholipid + 8 A = a 2,3-bis-O-(geranylgeranyl)-sn-glycerol 1-phospholipid + 8 AH2. The enzyme catalyses 2,3-bis-O-(phytanyl)-sn-glycerol 1-phosphate + 8 A = 2,3-bis-O-(geranylgeranyl)-sn-glycerol 1-phosphate + 8 AH2. It carries out the reaction CDP-2,3-bis-O-(geranylgeranyl)-sn-glycerol + 8 AH2 = CDP-2,3-bis-O-(phytanyl)-sn-glycerol + 8 A. The catalysed reaction is archaetidylserine + 8 AH2 = 2,3-bis-O-phytanyl-sn-glycero-3-phospho-L-serine + 8 A. The protein operates within membrane lipid metabolism; glycerophospholipid metabolism. In terms of biological role, is involved in the reduction of 2,3-digeranylgeranylglycerophospholipids (unsaturated archaeols) into 2,3-diphytanylglycerophospholipids (saturated archaeols) in the biosynthesis of archaeal membrane lipids. Catalyzes the formation of archaetidic acid (2,3-di-O-phytanyl-sn-glyceryl phosphate) from 2,3-di-O-geranylgeranylglyceryl phosphate (DGGGP) via the hydrogenation of each double bond of the isoprenoid chains. Is also probably able to reduce double bonds of geranyl groups in CDP-2,3-bis-O-(geranylgeranyl)-sn-glycerol and archaetidylserine, thus acting at various stages in the biosynthesis of archaeal membrane lipids. The chain is Digeranylgeranylglycerophospholipid reductase 2 from Methanopyrus kandleri (strain AV19 / DSM 6324 / JCM 9639 / NBRC 100938).